A 306-amino-acid chain; its full sequence is Non-specific ribonucleoside hydrolase RihC (306 aa).

His-235 is an active-site residue.

The protein belongs to the IUNH family. RihC subfamily.

In terms of biological role, hydrolyzes both purine and pyrimidine ribonucleosides with a broad-substrate specificity. The chain is Non-specific ribonucleoside hydrolase RihC from Salmonella typhi.